A 213-amino-acid chain; its full sequence is Orotate phosphoribosyltransferase (213 aa).

Lysine 26 lines the 5-phospho-alpha-D-ribose 1-diphosphate pocket. An orotate-binding site is contributed by 34-35 (FF). 5-phospho-alpha-D-ribose 1-diphosphate contacts are provided by residues 72 to 73 (YK), arginine 99, lysine 100, lysine 103, histidine 105, and 124 to 132 (DDVITAGTA). The orotate site is built by threonine 128 and arginine 156.

Belongs to the purine/pyrimidine phosphoribosyltransferase family. PyrE subfamily. Homodimer. Requires Mg(2+) as cofactor.

The enzyme catalyses orotidine 5'-phosphate + diphosphate = orotate + 5-phospho-alpha-D-ribose 1-diphosphate. It participates in pyrimidine metabolism; UMP biosynthesis via de novo pathway; UMP from orotate: step 1/2. Functionally, catalyzes the transfer of a ribosyl phosphate group from 5-phosphoribose 1-diphosphate to orotate, leading to the formation of orotidine monophosphate (OMP). This chain is Orotate phosphoribosyltransferase, found in Yersinia enterocolitica serotype O:8 / biotype 1B (strain NCTC 13174 / 8081).